Here is a 121-residue protein sequence, read N- to C-terminus: UPF0295 protein ABC1323 (121 aa).

2 consecutive transmembrane segments (helical) span residues 14-34 (TFAL…IFFK) and 41-61 (VIAM…YFFI).

It belongs to the UPF0295 family.

It is found in the cell membrane. The chain is UPF0295 protein ABC1323 from Shouchella clausii (strain KSM-K16) (Alkalihalobacillus clausii).